The sequence spans 1204 residues: ATP-dependent helicase/nuclease subunit A (1204 aa).

The UvrD-like helicase ATP-binding domain maps to 2–469 (TNFTKEQDQA…IILADNFRST (468 aa)). 23–30 (ASAGSGKT) serves as a coordination point for ATP. Residues 497–784 (GQLQFGASYY…KLMTIHASKG (288 aa)) form the UvrD-like helicase C-terminal domain.

This sequence belongs to the helicase family. AddA subfamily. Heterodimer of AddA and AddB/RexB. Mg(2+) is required as a cofactor.

The catalysed reaction is Couples ATP hydrolysis with the unwinding of duplex DNA by translocating in the 3'-5' direction.. The enzyme catalyses ATP + H2O = ADP + phosphate + H(+). The heterodimer acts as both an ATP-dependent DNA helicase and an ATP-dependent, dual-direction single-stranded exonuclease. Recognizes the chi site generating a DNA molecule suitable for the initiation of homologous recombination. The AddA nuclease domain is required for chi fragment generation; this subunit has the helicase and 3' -&gt; 5' nuclease activities. The sequence is that of ATP-dependent helicase/nuclease subunit A from Lactobacillus gasseri (strain ATCC 33323 / DSM 20243 / BCRC 14619 / CIP 102991 / JCM 1131 / KCTC 3163 / NCIMB 11718 / NCTC 13722 / AM63).